The following is a 433-amino-acid chain: Histidinol dehydrogenase (433 aa).

Residues Tyr-129, Gln-191, and Asn-214 each coordinate NAD(+). Substrate contacts are provided by Ser-237, Gln-259, and His-262. Residues Gln-259 and His-262 each coordinate Zn(2+). Residues Glu-326 and His-327 each act as proton acceptor in the active site. Substrate-binding residues include His-327, Asp-360, Glu-414, and His-419. Asp-360 is a binding site for Zn(2+). Residue His-419 participates in Zn(2+) binding.

Belongs to the histidinol dehydrogenase family. The cofactor is Zn(2+).

It catalyses the reaction L-histidinol + 2 NAD(+) + H2O = L-histidine + 2 NADH + 3 H(+). The protein operates within amino-acid biosynthesis; L-histidine biosynthesis; L-histidine from 5-phospho-alpha-D-ribose 1-diphosphate: step 9/9. In terms of biological role, catalyzes the sequential NAD-dependent oxidations of L-histidinol to L-histidinaldehyde and then to L-histidine. In Methanosarcina mazei (strain ATCC BAA-159 / DSM 3647 / Goe1 / Go1 / JCM 11833 / OCM 88) (Methanosarcina frisia), this protein is Histidinol dehydrogenase.